Here is a 314-residue protein sequence, read N- to C-terminus: PDZ domain-containing protein GIPC2 (314 aa).

The span at 1 to 12 (MPLGLRGKKKAA) shows a compositional bias: basic residues. Residues 1–36 (MPLGLRGKKKAAKSKEAARLVEGERSSGSQGVPGPP) are disordered. The segment covering 13–25 (KSKEAARLVEGER) has biased composition (basic and acidic residues). In terms of domain architecture, PDZ spans 117-197 (EVNVYKSEDS…EELFTLQLIE (81 aa)).

This sequence belongs to the GIPC family. Probably interacts with SEMA5A. In terms of tissue distribution, expressed in kidney and lung (at protein level).

Its subcellular location is the cytoplasm. This chain is PDZ domain-containing protein GIPC2 (Gipc2), found in Mus musculus (Mouse).